A 563-amino-acid chain; its full sequence is L-lactate permease (563 aa).

14 helical membrane passes run 14–34 (LLLS…ALAI), 37–57 (MKGY…AVLV), 73–93 (AVYG…LYKI), 131–151 (GAAG…GLGF), 157–177 (AGIC…GIPI), 194–214 (MVGR…IIIM), 220–240 (ALEI…VQYL), 249–269 (LPDV…LKWW), 304–324 (IFKA…WGIP), 381–401 (LGSA…ITAI), 419–439 (LPIL…SSGM), 448–468 (ALTG…GVFI), 506–526 (VTGK…VGLA), and 542–562 (FLLL…SWMI).

This sequence belongs to the lactate permease family.

Its subcellular location is the cell membrane. Is the principal permease for the uptake of L-lactate in B.subtilis. In Bacillus subtilis (strain 168), this protein is L-lactate permease (lutP).